A 690-amino-acid polypeptide reads, in one-letter code: uncharacterized protein (690 aa).

The segment at 553–601 (DESELLENEDKSESLENEDKSESLENEDKSESLENEDKSESLENEKKEK) is disordered. Positions 560 to 601 (NEDKSESLENEDKSESLENEDKSESLENEDKSESLENEKKEK) are enriched in basic and acidic residues.

The protein belongs to the glycosyltransferase 2 family.

This is an uncharacterized protein from Rickettsia bellii (strain RML369-C).